The following is a 303-amino-acid chain: Ribonuclease HIII (303 aa).

Positions 89 to 303 (WSVLGSDEVG…ANTKKAERLL (215 aa)) constitute an RNase H type-2 domain. Residues aspartate 95, glutamate 96, and aspartate 199 each contribute to the a divalent metal cation site.

The protein belongs to the RNase HII family. RnhC subfamily. It depends on Mn(2+) as a cofactor. Requires Mg(2+) as cofactor.

The protein localises to the cytoplasm. It catalyses the reaction Endonucleolytic cleavage to 5'-phosphomonoester.. Endonuclease that specifically degrades the RNA of RNA-DNA hybrids. The protein is Ribonuclease HIII of Leuconostoc mesenteroides subsp. mesenteroides (strain ATCC 8293 / DSM 20343 / BCRC 11652 / CCM 1803 / JCM 6124 / NCDO 523 / NBRC 100496 / NCIMB 8023 / NCTC 12954 / NRRL B-1118 / 37Y).